The chain runs to 365 residues: Spermidine/putrescine import ATP-binding protein PotA (365 aa).

An ABC transporter domain is found at 7–237 (LTLADITKRF…PNNLFVASFI (231 aa)). Residue 39–46 (GPSGCGKT) participates in ATP binding.

The protein belongs to the ABC transporter superfamily. Spermidine/putrescine importer (TC 3.A.1.11.1) family. The complex is composed of two ATP-binding proteins (PotA), two transmembrane proteins (PotB and PotC) and a solute-binding protein (PotD).

The protein localises to the cell inner membrane. It catalyses the reaction ATP + H2O + polyamine-[polyamine-binding protein]Side 1 = ADP + phosphate + polyamineSide 2 + [polyamine-binding protein]Side 1.. Functionally, part of the ABC transporter complex PotABCD involved in spermidine/putrescine import. Responsible for energy coupling to the transport system. The chain is Spermidine/putrescine import ATP-binding protein PotA from Hahella chejuensis (strain KCTC 2396).